A 1017-amino-acid polypeptide reads, in one-letter code: Sodium/potassium-transporting ATPase subunit alpha-2 (1017 aa).

The interval 1-31 (MDGREYSPAATTSENGGGRRKQKEKELDELK) is disordered. Residues 1–82 (MDGREYSPAA…NALTPPPTTP (82 aa)) lie on the Cytoplasmic side of the membrane. An interaction with phosphoinositide-3 kinase region spans residues 77–79 (PPP). Residues 83 to 103 (EWVKFCRQLFGGFSILLWIGA) traverse the membrane as a helical segment. Over 104–126 (ILCFLAYGIQAAMEDEPSNDNLY) the chain is Extracellular. Residues 127–147 (LGVVLAAVVIVTGCFSYYQEA) form a helical membrane-spanning segment. At 148 to 283 (KSSKIMDSFK…VGRTPIAMEI (136 aa)) the chain is on the cytoplasmic side. The interval 207 to 228 (KVDNSSLTGESEPQTRSPEFTH) is disordered. Polar residues predominate over residues 209 to 224 (DNSSLTGESEPQTRSP). A helical membrane pass occupies residues 284–303 (EHFIRLITGVAVFLGLSFFI). Topologically, residues 304–315 (LSLILGYTWLEA) are extracellular. The chain crosses the membrane as a helical span at residues 316 to 333 (VIFLIGIIVANVPEGLLA). Topologically, residues 334–766 (TVTVCLTLTA…EEGRLIFDNL (433 aa)) are cytoplasmic. The active-site 4-aspartylphosphate intermediate is the D371. Position 502 (K502) interacts with ATP. Mg(2+) contacts are provided by D711 and D715. A helical membrane pass occupies residues 767 to 786 (KKSIAYTLTSNIPEITPFLL). Over 787-796 (FIIANIPLPL) the chain is Extracellular. Residues 797 to 817 (GTVTILCIDLGTDMVPAISLA) form a helical membrane-spanning segment. The Cytoplasmic portion of the chain corresponds to 818-837 (YEAAESDIMKRQPRNPRTDK). A helical transmembrane segment spans residues 838–860 (LVNERLISMAYGQIGMIQALGGF). The Extracellular portion of the chain corresponds to 861 to 912 (FTYFVILAENGFLPARLLGVRLAWDDRSTNDLEDSYGQEWTYEQRKVVEFTC). The chain crosses the membrane as a helical span at residues 913–932 (HTAFFASIVVVQWADLIICK). The Cytoplasmic portion of the chain corresponds to 933 to 945 (TRRNSVFQQGMKN). At S937 the chain carries Phosphoserine; by PKA. A helical transmembrane segment spans residues 946-964 (KILIFGLLEETALAAFLSY). Residues 965 to 979 (CPGMGVALRMYPLKV) lie on the Extracellular side of the membrane. The helical transmembrane segment at 980–1000 (TWWFCAFPYSLLIFAYDEVRK) threads the bilayer. Topologically, residues 1001-1017 (LILRRYPGGWVEKETYY) are cytoplasmic.

This sequence belongs to the cation transport ATPase (P-type) (TC 3.A.3) family. Type IIC subfamily. As to quaternary structure, the sodium/potassium-transporting ATPase is composed of a catalytic alpha subunit, an auxiliary non-catalytic beta subunit and an additional regulatory subunit.

It localises to the membrane. It is found in the cell membrane. The catalysed reaction is K(+)(out) + Na(+)(in) + ATP + H2O = K(+)(in) + Na(+)(out) + ADP + phosphate + H(+). Functionally, this is the catalytic component of the active enzyme, which catalyzes the hydrolysis of ATP coupled with the exchange of sodium and potassium ions across the plasma membrane. This action creates the electrochemical gradient of sodium and potassium ions, providing the energy for active transport of various nutrients. This is Sodium/potassium-transporting ATPase subunit alpha-2 (ATP1A2) from Gallus gallus (Chicken).